The following is a 571-amino-acid chain: Sulfite reductase [NADPH] hemoprotein beta-component (571 aa).

[4Fe-4S] cluster is bound by residues Cys-435, Cys-441, Cys-480, and Cys-484. Cys-484 contacts siroheme.

Belongs to the nitrite and sulfite reductase 4Fe-4S domain family. As to quaternary structure, alpha(8)-beta(8). The alpha component is a flavoprotein, the beta component is a hemoprotein. It depends on siroheme as a cofactor. The cofactor is [4Fe-4S] cluster.

The catalysed reaction is hydrogen sulfide + 3 NADP(+) + 3 H2O = sulfite + 3 NADPH + 4 H(+). Its pathway is sulfur metabolism; hydrogen sulfide biosynthesis; hydrogen sulfide from sulfite (NADPH route): step 1/1. Its function is as follows. Component of the sulfite reductase complex that catalyzes the 6-electron reduction of sulfite to sulfide. This is one of several activities required for the biosynthesis of L-cysteine from sulfate. The chain is Sulfite reductase [NADPH] hemoprotein beta-component from Erwinia tasmaniensis (strain DSM 17950 / CFBP 7177 / CIP 109463 / NCPPB 4357 / Et1/99).